The following is a 358-amino-acid chain: Photosystem II protein D1 (358 aa).

3 helical membrane-spanning segments follow: residues 28–45 (YVGW…AAAI), 117–132 (HFLI…QWEL), and 141–155 (WICV…AAFA). Residue His-117 participates in chlorophyll a binding. A pheophytin a-binding site is contributed by Trp-125. Asp-169 and Glu-188 together coordinate [CaMn4O5] cluster. The helical transmembrane segment at 196–217 (FHMIGVAGMFGGSLFSAMHGSL) threads the bilayer. Position 197 (His-197) interacts with chlorophyll a. Residues His-214 and 263-264 (SF) contribute to the a quinone site. His-214 lines the Fe cation pocket. His-271 serves as a coordination point for Fe cation. Residues 273 to 287 (FLAAWPVICIWITSL) traverse the membrane as a helical segment. Residues His-331, Glu-332, Asp-341, and Ala-343 each coordinate [CaMn4O5] cluster. Residues 344–358 (AAESTPVALIAPAIG) constitute a propeptide that is removed on maturation.

It belongs to the reaction center PufL/M/PsbA/D family. PSII is composed of 1 copy each of membrane proteins PsbA, PsbB, PsbC, PsbD, PsbE, PsbF, PsbH, PsbI, PsbJ, PsbK, PsbL, PsbM, PsbT, PsbX, PsbY, Psb30/Ycf12, peripheral proteins PsbO, CyanoQ (PsbQ), PsbU, PsbV and a large number of cofactors. It forms dimeric complexes. It depends on The D1/D2 heterodimer binds P680, chlorophylls that are the primary electron donor of PSII, and subsequent electron acceptors. It shares a non-heme iron and each subunit binds pheophytin, quinone, additional chlorophylls, carotenoids and lipids. D1 provides most of the ligands for the Mn4-Ca-O5 cluster of the oxygen-evolving complex (OEC). There is also a Cl(-1) ion associated with D1 and D2, which is required for oxygen evolution. The PSII complex binds additional chlorophylls, carotenoids and specific lipids. as a cofactor. In terms of processing, tyr-160 forms a radical intermediate that is referred to as redox-active TyrZ, YZ or Y-Z. Post-translationally, C-terminally processed by CtpA; processing is essential to allow assembly of the oxygen-evolving complex and thus photosynthetic growth.

The protein localises to the cellular thylakoid membrane. The enzyme catalyses 2 a plastoquinone + 4 hnu + 2 H2O = 2 a plastoquinol + O2. In terms of biological role, photosystem II (PSII) is a light-driven water:plastoquinone oxidoreductase that uses light energy to abstract electrons from H(2)O, generating O(2) and a proton gradient subsequently used for ATP formation. It consists of a core antenna complex that captures photons, and an electron transfer chain that converts photonic excitation into a charge separation. The D1/D2 (PsbA/PsbD) reaction center heterodimer binds P680, the primary electron donor of PSII as well as several subsequent electron acceptors. The protein is Photosystem II protein D1 of Prochlorococcus marinus (strain MIT 9303).